We begin with the raw amino-acid sequence, 335 residues long: Transcriptional coactivator YAP1-B (335 aa).

Residues 1–13 (MEPGSQQQPSAPG) show a composition bias toward low complexity. The segment at 1-21 (MEPGSQQQPSAPGQQPPPVGH) is disordered. Ser-30 is subject to Phosphoserine; by LATS1 and LATS2. Over residues 114–124 (MNQQRLSQSAP) the composition is skewed to polar residues. A disordered region spans residues 114–146 (MNQQRLSQSAPVKSPPALQPQSPPSGVLGSGGN). Over residues 126–136 (KSPPALQPQSP) the composition is skewed to pro residues. Residues 137 to 335 (PSGVLGSGGN…LDKESFLTWL (199 aa)) form a transactivation domain region. Positions 145–173 (GNQQMRLQQLQMEKERLRLKHQELLRQVR) form a coiled coil.

Belongs to the YAP1 family. In terms of processing, phosphorylated by lats1 and lats2; leading to cytoplasmic translocation and inactivation.

It is found in the cytoplasm. The protein localises to the nucleus. The protein resides in the cell junction. It localises to the tight junction. Its subcellular location is the cell membrane. In terms of biological role, transcriptional regulator which can act both as a coactivator and a corepressor and is the critical downstream regulatory target in the Hippo signaling pathway that plays a pivotal role in organ size control and tumor suppression by restricting proliferation and promoting apoptosis. Plays a key role in tissue tension and 3D tissue shape by regulating cortical actomyosin network formation. In Xenopus laevis (African clawed frog), this protein is Transcriptional coactivator YAP1-B.